Reading from the N-terminus, the 208-residue chain is Small ribosomal subunit protein uS4A (208 aa).

The S4 RNA-binding domain maps to 98-159 (SRLDNVAYNM…HAKSYLRIKA (62 aa)).

Belongs to the universal ribosomal protein uS4 family. Part of the 30S ribosomal subunit. Contacts protein S5. The interaction surface between S4 and S5 is involved in control of translational fidelity.

Its function is as follows. One of the primary rRNA binding proteins, it binds directly to 16S rRNA where it nucleates assembly of the body of the 30S subunit. In terms of biological role, with S5 and S12 plays an important role in translational accuracy. This Nitrosomonas europaea (strain ATCC 19718 / CIP 103999 / KCTC 2705 / NBRC 14298) protein is Small ribosomal subunit protein uS4A (rpsD1).